The following is a 150-amino-acid chain: SPbeta prophage-derived uncharacterized protein YoqH (150 aa).

A signal peptide spans 1–23 (MKRFILVLSFLSIIVAYPIQTNA).

This chain is SPbeta prophage-derived uncharacterized protein YoqH (yoqH), found in Bacillus subtilis (strain 168).